Consider the following 528-residue polypeptide: Glucose-6-phosphate isomerase (528 aa).

The Proton donor role is filled by glutamate 322. Active-site residues include histidine 351 and lysine 455.

Belongs to the GPI family.

It is found in the cytoplasm. It catalyses the reaction alpha-D-glucose 6-phosphate = beta-D-fructose 6-phosphate. Its pathway is carbohydrate biosynthesis; gluconeogenesis. It functions in the pathway carbohydrate degradation; glycolysis; D-glyceraldehyde 3-phosphate and glycerone phosphate from D-glucose: step 2/4. Its function is as follows. Catalyzes the reversible isomerization of glucose-6-phosphate to fructose-6-phosphate. The polypeptide is Glucose-6-phosphate isomerase (Synechococcus elongatus (strain ATCC 33912 / PCC 7942 / FACHB-805) (Anacystis nidulans R2)).